The sequence spans 739 residues: POU domain, class 2, transcription factor 1 (739 aa).

The span at 1–11 shows a compositional bias: polar residues; sequence MNNPSETSKPS. Disordered regions lie at residues 1-39, 67-95, 253-277, 353-378, and 489-553; these read MNNP…GGPI, SLNV…SVQA, TPIQ…EEPS, DSTL…RRKK, and SVTG…SSPL. Residues 81–95 are compositionally biased toward low complexity; the sequence is SQQPSQPSQQPSVQA. A POU-specific domain is found at 274 to 348; the sequence is EEPSDLEELE…LLEKWLNDAE (75 aa). Positions 353–364 are enriched in low complexity; the sequence is DSTLSSPSALNS. The segment at residues 375-434 is a DNA-binding region (homeobox); the sequence is RRKKRTSIETNIRVALEKSFLENQKPTSEEITMIADQLNMEKEVIRVWFCNRRQKEKRIN. Low complexity predominate over residues 489 to 552; it reads SVTGTTETTS…QTTSTPLSSP (64 aa).

It belongs to the POU transcription factor family. Class-2 subfamily. As to quaternary structure, interacts with NR3C1, AR and PGR.

The protein localises to the nucleus. Its function is as follows. Transcription factor that binds to the octamer motif (5'-ATTTGCAT-3') and activates the promoters of the genes for some small nuclear RNAs (snRNA) and of genes such as those for histone H2B and immunoglobulins. Modulates transcription transactivation by NR3C1, AR and PGR. The sequence is that of POU domain, class 2, transcription factor 1 (POU2F1) from Gallus gallus (Chicken).